The primary structure comprises 576 residues: N-acetylmuramoyl-L-alanine amidase (576 aa).

The first 21 residues, 1–21 (MAQGVLWILLGLLLWSDPGTA), serve as a signal peptide directing secretion. Asparagine 77 carries an N-linked (GlcNAc...) asparagine glycan. Serine 239 bears the Phosphoserine mark. Deamidated asparagine is present on residues asparagine 274 and asparagine 322. Asparagine 367 carries N-linked (GlcNAc...) asparagine glycosylation. One can recognise an N-acetylmuramoyl-L-alanine amidase domain in the interval 406-532 (FLYVHHTYVP…RQLVRTDCPG (127 aa)). Histidine 410 contacts Zn(2+). A disulfide bridge connects residues cysteine 419 and cysteine 425. Asparagine 485 carries an N-linked (GlcNAc...) asparagine glycan. 2 residues coordinate Zn(2+): histidine 522 and cysteine 530. Positions 550 to 576 (KPRPARSVSKRSRREPPPRTLPATDLQ) are disordered.

Belongs to the N-acetylmuramoyl-L-alanine amidase 2 family. It depends on Zn(2+) as a cofactor. Strongly expressed in liver and fetal liver, and secreted into serum. Expressed to a much lesser extent in transverse colon, lymph nodes, heart, thymus, pancreas, descending colon, stomach and testis. Isoform 2 is not detected in the liver or serum.

It localises to the secreted. The protein resides in the membrane. It carries out the reaction Hydrolyzes the link between N-acetylmuramoyl residues and L-amino acid residues in certain cell-wall glycopeptides.. Its function is as follows. May play a scavenger role by digesting biologically active peptidoglycan (PGN) into biologically inactive fragments. Has no direct bacteriolytic activity. This is N-acetylmuramoyl-L-alanine amidase (PGLYRP2) from Homo sapiens (Human).